The following is a 366-amino-acid chain: DNA polymerase IV (366 aa).

The 192-residue stretch at 6–197 folds into the UmuC domain; the sequence is IIHVDMDYFY…LKVSKLWGIG (192 aa). Positions 10 and 114 each coordinate Mg(2+). Residue Glu-115 is part of the active site.

It belongs to the DNA polymerase type-Y family. As to quaternary structure, monomer. It depends on Mg(2+) as a cofactor.

The protein resides in the cytoplasm. It catalyses the reaction DNA(n) + a 2'-deoxyribonucleoside 5'-triphosphate = DNA(n+1) + diphosphate. Poorly processive, error-prone DNA polymerase involved in untargeted mutagenesis. Copies undamaged DNA at stalled replication forks, which arise in vivo from mismatched or misaligned primer ends. These misaligned primers can be extended by PolIV. Exhibits no 3'-5' exonuclease (proofreading) activity. May be involved in translesional synthesis. The chain is DNA polymerase IV from Methanosarcina acetivorans (strain ATCC 35395 / DSM 2834 / JCM 12185 / C2A).